A 534-amino-acid chain; its full sequence is CTP synthase (534 aa).

Residues 1-267 (MTKYIFVTGG…DQIVCDHLKL (267 aa)) form an amidoligase domain region. A CTP-binding site is contributed by serine 13. Serine 13 contributes to the UTP binding site. Residue 14 to 19 (SIGKGI) coordinates ATP. Tyrosine 54 serves as a coordination point for L-glutamine. Aspartate 71 contributes to the ATP binding site. Residues aspartate 71 and glutamate 141 each contribute to the Mg(2+) site. Residues 148–150 (DIE), 188–193 (KTKPTQ), and lysine 224 each bind CTP. Residues 188–193 (KTKPTQ) and lysine 224 each bind UTP. Positions 292–534 (KIALVGKYVE…FVTAAVENMK (243 aa)) constitute a Glutamine amidotransferase type-1 domain. L-glutamine is bound at residue glycine 354. Residue cysteine 381 is the Nucleophile; for glutamine hydrolysis of the active site. Residues 382 to 385 (LGMQ), glutamate 405, and arginine 463 each bind L-glutamine. Residues histidine 508 and glutamate 510 contribute to the active site.

Belongs to the CTP synthase family. In terms of assembly, homotetramer.

It carries out the reaction UTP + L-glutamine + ATP + H2O = CTP + L-glutamate + ADP + phosphate + 2 H(+). The enzyme catalyses L-glutamine + H2O = L-glutamate + NH4(+). It catalyses the reaction UTP + NH4(+) + ATP = CTP + ADP + phosphate + 2 H(+). The protein operates within pyrimidine metabolism; CTP biosynthesis via de novo pathway; CTP from UDP: step 2/2. Its activity is regulated as follows. Allosterically activated by GTP, when glutamine is the substrate; GTP has no effect on the reaction when ammonia is the substrate. The allosteric effector GTP functions by stabilizing the protein conformation that binds the tetrahedral intermediate(s) formed during glutamine hydrolysis. Inhibited by the product CTP, via allosteric rather than competitive inhibition. In terms of biological role, catalyzes the ATP-dependent amination of UTP to CTP with either L-glutamine or ammonia as the source of nitrogen. Regulates intracellular CTP levels through interactions with the four ribonucleotide triphosphates. The sequence is that of CTP synthase from Streptococcus agalactiae serotype Ia (strain ATCC 27591 / A909 / CDC SS700).